The sequence spans 579 residues: Arginine--tRNA ligase (579 aa).

A 'HIGH' region motif is present at residues proline 128 to histidine 138.

This sequence belongs to the class-I aminoacyl-tRNA synthetase family. In terms of assembly, monomer.

It localises to the cytoplasm. The enzyme catalyses tRNA(Arg) + L-arginine + ATP = L-arginyl-tRNA(Arg) + AMP + diphosphate. The polypeptide is Arginine--tRNA ligase (Pseudomonas syringae pv. syringae (strain B728a)).